The following is a 330-amino-acid chain: Glucokinase (330 aa).

14–19 contributes to the ATP binding site; sequence ADIGGT.

This sequence belongs to the bacterial glucokinase family.

The protein resides in the cytoplasm. It catalyses the reaction D-glucose + ATP = D-glucose 6-phosphate + ADP + H(+). The polypeptide is Glucokinase (Colwellia psychrerythraea (strain 34H / ATCC BAA-681) (Vibrio psychroerythus)).